The chain runs to 412 residues: Proline-rich protein 30 (412 aa).

2 stretches are compositionally biased toward polar residues: residues 1-15 (MLPQNKDQVLPQTSV) and 23-39 (GFSQLVDSSPHNLQPLS). Disordered regions lie at residues 1-88 (MLPQ…HPYS), 123-174 (PLTP…SNRQ), and 317-412 (RPKE…KSSV). Low complexity-rich tracts occupy residues 50–59 (PFSSTQSRRP), 126–142 (PSFSPSQPQNSSLPHSP), and 334–350 (QLPASQPPAAQARADPV). Residues 353 to 372 (TPSQTRSFRSAGLQSPNSPR) show a composition bias toward polar residues.

In Homo sapiens (Human), this protein is Proline-rich protein 30 (PRR30).